Reading from the N-terminus, the 722-residue chain is PAB1-binding protein 1 (722 aa).

A compositionally biased stretch (basic and acidic residues) spans 1–10 (MKGNFRKRDS). A disordered region spans residues 1 to 38 (MKGNFRKRDSSTNSRKGGNSDSNYTNGGVPNQNNSSMF). Residues 11 to 38 (STNSRKGGNSDSNYTNGGVPNQNNSSMF) show a composition bias toward polar residues. The Sm domain occupies 51 to 107 (RQDYLLANSIGSDVTVTVTSGVKYTGLLVSCNLESTNGIDVVLRFPRVADSGVSDSV). Residue Ser-106 is modified to Phosphoserine. Thr-193 is subject to Phosphothreonine. Ser-215 is modified (phosphoserine). 3 disordered regions span residues 305–380 (ALKS…LSSK), 412–488 (SSTL…NPHT), and 683–722 (GSGPSGMPANGSAMHSHGHSRNYHQTSHHGHHNSSTSGHK). Low complexity-rich tracts occupy residues 307–316 (KSNSKPNSNK), 338–347 (SSSNSNKNEN), 356–370 (PAAAGAPEGKPPQKT), and 412–421 (SSTLKSNSSL). A Glycyl lysine isopeptide (Lys-Gly) (interchain with G-Cter in ubiquitin) cross-link involves residue Lys-344. Positions 429–455 (TPSAKTVSPTTQISAGKSESRRSGSNI) are enriched in polar residues. Residue Ser-436 is modified to Phosphoserine. Residues 456–471 (SQGQSSTGHTTRSSTS) are compositionally biased toward low complexity. Residues 698–722 (SHGHSRNYHQTSHHGHHNSSTSGHK) show a composition bias toward basic residues.

It belongs to the ataxin-2 family. Interacts (via C-terminus) with MKT1 (via C-terminus). Interacts with FIR1, IGO1, LSM12, PBP4 and PAB1.

The protein localises to the cytoplasm. It localises to the nucleus. Its subcellular location is the mitochondrion. In terms of biological role, involved in pre-mRNA polyadenylation. May act to repress the ability of PAB1 to negatively regulate polyadenylation. Negative regulator of poly(A) nuclease (PAN) activity. Promotes mating-type switching in mother cells by positively regulating HO mRNA translation. Localizes MKT1 to polysomes. This chain is PAB1-binding protein 1 (PBP1), found in Saccharomyces cerevisiae (strain ATCC 204508 / S288c) (Baker's yeast).